The primary structure comprises 188 residues: Acireductone dioxygenase 1 (188 aa).

Fe(2+) contacts are provided by histidine 90, histidine 92, glutamate 96, and histidine 135. Ni(2+) contacts are provided by histidine 90, histidine 92, glutamate 96, and histidine 135.

The protein belongs to the acireductone dioxygenase (ARD) family. Fe(2+) serves as cofactor. It depends on Ni(2+) as a cofactor.

It is found in the cytoplasm. Its subcellular location is the nucleus. The catalysed reaction is 1,2-dihydroxy-5-(methylsulfanyl)pent-1-en-3-one + O2 = 4-methylsulfanyl-2-oxobutanoate + formate + 2 H(+). It carries out the reaction 1,2-dihydroxy-5-(methylsulfanyl)pent-1-en-3-one + O2 = 3-(methylsulfanyl)propanoate + CO + formate + 2 H(+). The protein operates within amino-acid biosynthesis; L-methionine biosynthesis via salvage pathway; L-methionine from S-methyl-5-thio-alpha-D-ribose 1-phosphate: step 5/6. Functionally, catalyzes 2 different reactions between oxygen and the acireductone 1,2-dihydroxy-3-keto-5-methylthiopentene (DHK-MTPene) depending upon the metal bound in the active site. Fe-containing acireductone dioxygenase (Fe-ARD) produces formate and 2-keto-4-methylthiobutyrate (KMTB), the alpha-ketoacid precursor of methionine in the methionine recycle pathway. Ni-containing acireductone dioxygenase (Ni-ARD) produces methylthiopropionate, carbon monoxide and formate, and does not lie on the methionine recycle pathway. The polypeptide is Acireductone dioxygenase 1 (Vitis vinifera (Grape)).